The sequence spans 79 residues: uncharacterized protein (79 aa).

Residues 3–54 (SKKNKIVAALLAFFFGGLGIHKFYLGRVGQGILYILFCWTGIPSIIAFIEFI) enclose the TM2 domain. Helical transmembrane passes span 8–28 (IVAA…FYLG) and 37–57 (ILFC…IIFL).

Its subcellular location is the cell membrane. This is an uncharacterized protein from Bacillus subtilis (strain 168).